A 91-amino-acid chain; its full sequence is Insertion element IS1 1 protein InsA (91 aa).

The protein belongs to the IS1 elements InsA family.

In terms of biological role, absolutely required for transposition of IS1. This chain is Insertion element IS1 1 protein InsA (insA1), found in Escherichia coli (strain K12).